The sequence spans 396 residues: Elongation factor Tu (396 aa).

The region spanning 10 to 205 is the tr-type G domain; sequence KPHVNIGTIG…AVDESIPDPV (196 aa). The segment at 19-26 is G1; it reads GHVDHGKT. Residue 19-26 coordinates GTP; it reads GHVDHGKT. Thr-26 contacts Mg(2+). The interval 62–66 is G2; that stretch reads GITIN. Residues 83–86 are G3; the sequence is DAPG. Residues 83 to 87 and 138 to 141 each bind GTP; these read DAPGH and NKAD. The segment at 138 to 141 is G4; it reads NKAD. The segment at 175–177 is G5; the sequence is SAL.

Belongs to the TRAFAC class translation factor GTPase superfamily. Classic translation factor GTPase family. EF-Tu/EF-1A subfamily. Monomer.

It localises to the cytoplasm. The catalysed reaction is GTP + H2O = GDP + phosphate + H(+). Its function is as follows. GTP hydrolase that promotes the GTP-dependent binding of aminoacyl-tRNA to the A-site of ribosomes during protein biosynthesis. The protein is Elongation factor Tu of Mycolicibacterium gilvum (strain PYR-GCK) (Mycobacterium gilvum (strain PYR-GCK)).